Consider the following 306-residue polypeptide: Putative F-box protein At1g47300 (306 aa).

Residues 1–45 (MISDSIPKELILEIMLRLPAKSIARFHCVSKQWASMLSRPYFTEL) enclose the F-box domain. A disordered region spans residues 235–278 (DPKLLESKEEEEEEEEEEEEEEEEEEEEEEEEEEEESKEREKEK). The span at 242–270 (KEEEEEEEEEEEEEEEEEEEEEEEEEEEE) shows a compositional bias: acidic residues.

The protein is Putative F-box protein At1g47300 of Arabidopsis thaliana (Mouse-ear cress).